The chain runs to 871 residues: Protein translocase subunit SecA (871 aa).

Residues Q80, 98-102 (GEGKT), and D537 each bind ATP. A disordered region spans residues 852-871 (MEKGKKKGGSHGLGKIRVKR). Positions 855–871 (GKKKGGSHGLGKIRVKR) are enriched in basic residues.

The protein belongs to the SecA family. In terms of assembly, monomer and homodimer. Part of the essential Sec protein translocation apparatus which comprises SecA, SecYEG and auxiliary proteins SecDF. Other proteins may also be involved.

It localises to the cell inner membrane. The protein resides in the cytoplasm. The enzyme catalyses ATP + H2O + cellular proteinSide 1 = ADP + phosphate + cellular proteinSide 2.. Part of the Sec protein translocase complex. Interacts with the SecYEG preprotein conducting channel. Has a central role in coupling the hydrolysis of ATP to the transfer of proteins into and across the cell membrane, serving as an ATP-driven molecular motor driving the stepwise translocation of polypeptide chains across the membrane. The chain is Protein translocase subunit SecA from Thermotoga neapolitana (strain ATCC 49049 / DSM 4359 / NBRC 107923 / NS-E).